Here is a 105-residue protein sequence, read N- to C-terminus: MAEWSGEYISPYAEHGKKSEQVKKITVSIPLKVLKILTDERTRRQVNNLRHATNSELLCEAFLHAFTGQPLPNDEDLRKERSDEIPEEAKIIMRELGIDPDTWEY.

It belongs to the MetJ family. In terms of assembly, homodimer.

It is found in the cytoplasm. In terms of biological role, this regulatory protein, when combined with SAM (S-adenosylmethionine) represses the expression of the methionine regulon and of enzymes involved in SAM synthesis. This Citrobacter koseri (strain ATCC BAA-895 / CDC 4225-83 / SGSC4696) protein is Met repressor.